A 632-amino-acid chain; its full sequence is MSYLSRSALARSVGAKHLTGVLRKIGRRGGRSMHVLPLASPSTLLKISSQTLRQDFTVLGARNFHSSSVRLNELTDNLRKLDTIEREVEDVDVCIVGAGPAGLSAAIRIKQQAAKANRDIRVVVLEKAAEPGNHSVSGAVIQPTALDELLPNWRDDPPENCTAVTHDKMKFLIPKLHFPIPVPPAMKNHGNYVMSLAEFTRWLAAKAEEYGVEIYPSFAASEVLYNKDGSVIGVATNDFGVDSKGLPKDNFERGMAFHAPVTLFAEGAHGSLSKSIIKRFNLRGNCEPQTYGLGVKEVWRVPDENFRKGEVAHTLGWPMRNDTYGGGFMYQFGDNYVTVGLVVGLDYPNPYVSPALEFQRMKQNPFFAKVLKGGKCLEYAARALNEGGYQAIPKLVFPGGALIGCSAGFVNVAKIKGTHTAMKSGIVAADAIVDAFGRDAASKPLLLNDYEENLKNTYVFKELYSVRNIRPSFHSFLGNYGGMAYSAVEAYVLKGRVPWTLKHKGGDAKATKSASKYKPINYPKPDNVLSFDIPTSVSRSATMHAENQPCHLFDHRPKDRKSCFETYKGVENKFCPAGVYEYVNDEASSYGKRFVINSQNCVHCKTCDIKDPLQGIQWKTPQGGDGPKYTLT.

Position 93–107 (93–107 (VCIVGAGPAGLSAAI)) interacts with FAD. The [4Fe-4S] cluster site is built by cysteine 575, cysteine 601, cysteine 604, and cysteine 607. Positions 592–621 (KRFVINSQNCVHCKTCDIKDPLQGIQWKTP) constitute a 4Fe-4S ferredoxin-type domain.

This sequence belongs to the ETF-QO/FixC family. [4Fe-4S] cluster serves as cofactor. Requires FAD as cofactor.

It is found in the mitochondrion inner membrane. The catalysed reaction is a ubiquinone + reduced [electron-transfer flavoprotein] = a ubiquinol + oxidized [electron-transfer flavoprotein] + H(+). Its function is as follows. Accepts electrons from ETF and reduces ubiquinone. The sequence is that of Probable electron transfer flavoprotein-ubiquinone oxidoreductase, mitochondrial from Schizosaccharomyces pombe (strain 972 / ATCC 24843) (Fission yeast).